Here is a 553-residue protein sequence, read N- to C-terminus: CTP synthase (553 aa).

The interval 1-270 (MTKFVFVTGG…DRIICEELRI (270 aa)) is amidoligase domain. Residue S13 participates in CTP binding. S13 lines the UTP pocket. ATP is bound by residues 14 to 19 (SLGKGI) and D71. Residues D71 and E144 each contribute to the Mg(2+) site. CTP is bound by residues 151 to 153 (DIE), 191 to 196 (KTKPTQ), and K227. Residues 191-196 (KTKPTQ) and K227 each bind UTP. Residues 295–547 (TIGMVGKYVD…VEAALAHQQN (253 aa)) form the Glutamine amidotransferase type-1 domain. Position 356 (G356) interacts with L-glutamine. The active-site Nucleophile; for glutamine hydrolysis is the C383. L-glutamine-binding positions include 384–387 (LGMQ), E407, and R473. Active-site residues include H520 and E522.

This sequence belongs to the CTP synthase family. As to quaternary structure, homotetramer.

It carries out the reaction UTP + L-glutamine + ATP + H2O = CTP + L-glutamate + ADP + phosphate + 2 H(+). The catalysed reaction is L-glutamine + H2O = L-glutamate + NH4(+). The enzyme catalyses UTP + NH4(+) + ATP = CTP + ADP + phosphate + 2 H(+). Its pathway is pyrimidine metabolism; CTP biosynthesis via de novo pathway; CTP from UDP: step 2/2. With respect to regulation, allosterically activated by GTP, when glutamine is the substrate; GTP has no effect on the reaction when ammonia is the substrate. The allosteric effector GTP functions by stabilizing the protein conformation that binds the tetrahedral intermediate(s) formed during glutamine hydrolysis. Inhibited by the product CTP, via allosteric rather than competitive inhibition. Catalyzes the ATP-dependent amination of UTP to CTP with either L-glutamine or ammonia as the source of nitrogen. Regulates intracellular CTP levels through interactions with the four ribonucleotide triphosphates. This is CTP synthase from Ralstonia pickettii (strain 12J).